We begin with the raw amino-acid sequence, 161 residues long: uncharacterized protein (161 aa).

This is an uncharacterized protein from Lepidoptera (butterflies and moths).